The chain runs to 456 residues: Kynurenine 3-monooxygenase (456 aa).

This sequence belongs to the aromatic-ring hydroxylase family. KMO subfamily. Requires FAD as cofactor.

The enzyme catalyses L-kynurenine + NADPH + O2 + H(+) = 3-hydroxy-L-kynurenine + NADP(+) + H2O. It participates in cofactor biosynthesis; NAD(+) biosynthesis; quinolinate from L-kynurenine: step 1/3. Its function is as follows. Catalyzes the hydroxylation of L-kynurenine (L-Kyn) to form 3-hydroxy-L-kynurenine (L-3OHKyn). Required for synthesis of quinolinic acid. In Xanthomonas campestris pv. campestris (strain B100), this protein is Kynurenine 3-monooxygenase.